The sequence spans 921 residues: MSTNEQLAWDFDDGDVAEVRPDTGIARFAPGSEQWIAALQPTDDDAIRLDRFDVNTMTAEAAARLWARVAAWVESDQIAYYIDDSPVSSDAAYDARMRCLERLEAAFPSLDNPQSPTHRVGGSFSNDFVSVRHPSRMMSLDDVFSIEELKDWYDSVIRDLDWPESKPLPMSCEVKIDGLALNLIYRNGVLEQGLTRGDGVTGEDITLNVRTIGSIPANLGGPKEDVPDFVEIRGEVFMRWDDFHTLNNEQEDAGRAPFANPRNAAAGSLRQKDPRITATRRLSFYAHGLGQLTWGADHPRGTHDVVADQSQAYDLYTRWGVPVSPHNRAVTSFQEILDMIEYYGEHRGDIEHALDGIVVKVDDLGLQRTLGATSRAPRWAIAYKYPPEEVNTELLNITVQVGRTGRVTPVAVLKPVYVAGSTVARTTLHNGFEVKRKGVLIGDTVVVRKAGDVIPELVGPVLERRKGREDQLREFVMPEFCPSCGAKLAPAKEGDKDIRCPNVESCPAQLTERVISLASRKAFDIEHLGEQSAIALTNPEENRPDSVATYAPNITEVLVAPGEEPDPYEPVEGLELPAAQKPVLSNESGLFDLTAADLRDVRVWREAAIVEVHETVGANGKKKKVRKRVGGSGLWHQVPAFWTAPTPAKKLTAKQLAERAQREAAIESAETQGGAASETTGAPTGAEAPLGTMPGFAAASYPEYDVPADAVIVRVDHKTTRTGVTDVPVIIRPGENTRKMFDEMDKARHADLWRVLVALSIRRLGPPTARLIASAMGSLAAIEKATIEDLTAIDGVGPEIAESVVNWFAATREPGDWRGATLRAWQAAGVGVDEAETSSLPQTLAGKTVVVTGSLEGYSRDSAKEAIIERGGKAAGSVSKKTDYVVIGANAGSKAIKAEELGIPMLGEIQFAQLLETGSID.

Residues 90–94, 139–140, and Glu173 each bind NAD(+); these read DAAYD and SL. Residue Lys175 is the N6-AMP-lysine intermediate of the active site. Positions 196, 235, 360, and 384 each coordinate NAD(+). Cys481, Cys484, Cys500, and Cys506 together coordinate Zn(2+). The segment at 663-688 is disordered; the sequence is EAAIESAETQGGAASETTGAPTGAEA. The region spanning 839 to 921 is the BRCT domain; the sequence is SLPQTLAGKT…AQLLETGSID (83 aa).

Belongs to the NAD-dependent DNA ligase family. LigA subfamily. Mg(2+) serves as cofactor. Requires Mn(2+) as cofactor.

The catalysed reaction is NAD(+) + (deoxyribonucleotide)n-3'-hydroxyl + 5'-phospho-(deoxyribonucleotide)m = (deoxyribonucleotide)n+m + AMP + beta-nicotinamide D-nucleotide.. Functionally, DNA ligase that catalyzes the formation of phosphodiester linkages between 5'-phosphoryl and 3'-hydroxyl groups in double-stranded DNA using NAD as a coenzyme and as the energy source for the reaction. It is essential for DNA replication and repair of damaged DNA. The sequence is that of DNA ligase from Bifidobacterium longum subsp. infantis (strain ATCC 15697 / DSM 20088 / JCM 1222 / NCTC 11817 / S12).